Here is a 245-residue protein sequence, read N- to C-terminus: Probable ABC transporter ATP-binding protein p29 (245 aa).

The ABC transporter domain maps to 7 to 245; that stretch reads LSFEKVSIIY…KEQLYKIYDN (239 aa). An ATP-binding site is contributed by 39–46; sequence GKSGVGKS.

Belongs to the ABC transporter superfamily.

Part of a high-affinity transport system. The polypeptide is Probable ABC transporter ATP-binding protein p29 (p29) (Mycoplasma genitalium (strain ATCC 33530 / DSM 19775 / NCTC 10195 / G37) (Mycoplasmoides genitalium)).